The primary structure comprises 294 residues: Dolichol-phosphate mannosyltransferase (294 aa).

Positions 1–27 (MSIALDMDASAKMRKQPGSSGWSTSST) are disordered. The Cytoplasmic portion of the chain corresponds to 1 to 263 (MSIALDMDAS…QQLVELYRFR (263 aa)). Low complexity predominate over residues 17 to 27 (PGSSGWSTSST). 12 residues coordinate GDP-alpha-D-mannose: Pro35, Glu39, Val70, Asp72, Asp123, Ala124, Asp125, Gln127, Arg151, Lys211, Arg237, and Lys243. Mg(2+) is bound by residues Asp125 and Gln127. Mn(2+)-binding residues include Asp125 and Gln127. Residues 264 to 284 (FGTVPIVFVLIVLLVLALYIW) traverse the membrane as a helical segment. The Lumenal portion of the chain corresponds to 285–294 (SHVLAPMLGA).

This sequence belongs to the glycosyltransferase 2 family. Mg(2+) is required as a cofactor. Requires Mn(2+) as cofactor. Ca(2+) serves as cofactor.

It localises to the endoplasmic reticulum membrane. The catalysed reaction is a di-trans,poly-cis-dolichyl phosphate + GDP-alpha-D-mannose = a di-trans,poly-cis-dolichyl beta-D-mannosyl phosphate + GDP. It participates in protein modification; protein glycosylation. In terms of biological role, transfers mannose from GDP-mannose to dolichol monophosphate to form dolichol phosphate mannose (Dol-P-Man) which is the mannosyl donor in pathways leading to N-glycosylation, glycosyl phosphatidylinositol membrane anchoring, and O-mannosylation of proteins. In Mycosarcoma maydis (Corn smut fungus), this protein is Dolichol-phosphate mannosyltransferase (DPM1).